A 503-amino-acid polypeptide reads, in one-letter code: SWI/SNF and RSC complexes subunit ssr2 (503 aa).

The region spanning 18 to 115 is the SWIRM domain; it reads IIVPSYAGWF…YQIDPETRPA (98 aa). Ser175 is subject to Phosphoserine. The segment at 188 to 242 adopts a ZZ-type; degenerate zinc-finger fold; the sequence is RVDKVCFTCGVNCSQTWYHNLKNKKYDICPNCYKQGRFSSSFNSSDFLCMDAIDF. Zn(2+)-binding residues include Cys193, Cys196, Cys216, and Cys219. The region spanning 245–296 is the SANT domain; sequence DEEKPWSNQETLLLLEAIETYGDDWNQIALHVGSRTKEQCLIHFLQIPIEDP. At Ser306 the chain carries Phosphoserine.

The protein belongs to the SMARCC family. As to quaternary structure, component of the RSC complex composed of at least arp9, arp42, rsc1, rsc4, rsc7, rsc9, rsc58, sfh1, snf21, ssr1, ssr2, ssr3 and ssr4. The complex interacts with histone and histone variant components of centromeric chromatin. Component of the SWI/SNF global transcription activator complex composed of at least arp9, arp42, snf5, snf22, snf30, sbf59, sol1, ssr1, ssr2, ssr3, ssr4 and tfg3.

Its subcellular location is the cytoplasm. It is found in the nucleus. Its function is as follows. Component of the chromatin structure remodeling complex (RSC), which is involved in transcription regulation and nucleosome positioning. Controls particularly membrane and organelle development genes. Part of the SWI/SNF complex, an ATP-dependent chromatin remodeling complex, required for the positive and negative regulation of gene expression of a large number of genes. It changes chromatin structure by altering DNA-histone contacts within a nucleosome, leading eventually to a change in nucleosome position, thus facilitating or repressing binding of gene-specific transcription factors. In Schizosaccharomyces pombe (strain 972 / ATCC 24843) (Fission yeast), this protein is SWI/SNF and RSC complexes subunit ssr2 (ssr2).